The following is a 621-amino-acid chain: MBT domain-containing protein 1 (621 aa).

The span at 1-21 (MEKTKDPADRSSRSERKRRDS) shows a compositional bias: basic and acidic residues. Residues 1-55 (MEKTKDPADRSSRSERKRRDSFGMFDGYDSCSEDTSSSSSSDESEEEVAPLPSSL) form a disordered region. A compositionally biased stretch (low complexity) spans 29–41 (DSCSEDTSSSSSS). The FCS-type zinc finger occupies 68 to 103 (PDGKSGMATCEMCGMVGVRDAFYSKTKRFCSVSCSR). Positions 77, 80, 97, and 101 each coordinate Zn(2+). 4 MBT repeats span residues 164–268 (FSWG…LVPP), 276–373 (TNWK…IGHR), 374–479 (FKRT…LTPP), and 487–583 (FKWF…LQPP). The tract at residues 581-621 (QPPAPQSNKDGQSNVSKQKKKSKSQPYKGHKKNFRKPGNRP) is disordered. Over residues 597–621 (KQKKKSKSQPYKGHKKNFRKPGNRP) the composition is skewed to basic residues.

In terms of assembly, monomer. Component of the NuA4 histone acetyltransferase complex.

The protein resides in the nucleus. It is found in the chromosome. Its function is as follows. Chromatin reader component of the NuA4 histone acetyltransferase complex, a multiprotein complex involved in transcriptional activation of select genes principally by acetylation of nucleosomal histones H4 and H2A. The NuA4 complex plays a direct role in repair of DNA double-strand breaks (DSBs) by promoting homologous recombination (HR). MBTD1 specifically recognizes and binds monomethylated and dimethylated 'Lys-20' on histone H4 (H4K20me1 and H4K20me2, respectively). In the NuA4 complex, MBTD1 promotes recruitment of the complex to H4K20me marks by competing with TP53BP1 for binding to H4K20me. Following recruitment to H4K20me at DNA breaks, the NuA4 complex catalyzes acetylation of 'Lys-15' on histone H2A (H2AK15), blocking the ubiquitination mark required for TP53BP1 localization at DNA breaks, thereby promoting homologous recombination (HR). The chain is MBT domain-containing protein 1 from Xenopus laevis (African clawed frog).